The chain runs to 654 residues: MPLKWKTSSPAIWKFPVPVLKTSRSTPLSPAYISLVEEEDQHLKLCLGSEMGLSSHLQSCKAGSTRIFTSNSHSSVVLQGFDQLRLDGLLCDVTLMPGDTDDAYPVHRVMMASASDYFKAMFTGGMKEQELMCIKLHGVSRVGLRKIIDFIYTAKLSLNMDTLQDTLEAASFLQILPVLDFCKVFLISGVTLDNCVEVGRIANTYHLTEVDKYVNSFVLKNFAALLSTGEFLKLPFERLAFVLSSNSLKRCTELDLFKATCRWLRLEEPRMDVAAKLMKNIRFPLMTPQELINYVQTVDFMRTDNTCVNLLLEASNYQMMPFMQPVMQSDRTAIRSDTTRLVTLGGVLRQQLVVSKELRMYDEKTHEWKSLAPMDAPRYQHGIAVIGNFLYVVGGQSNYDTKGKTAVDTVFRFDPRYNKWIQVASLNEKRTFFHLSALKGFLYAVGGRNAAGELPTVECYNPRTNEWTYVAKMNEPHYGHAGTVYGGVMYISGGITHDTFQKELMCFDPDTDKWTQKAPMTTVRGLHCMCTVGDRLYVIGGNHFRGTSDYDDVLSCEYYSPILDQWTPIASMLRGQSDVGVAVFENKIYVVGGYSWNNRCMVEIVQKYDPEKNEWHKVFDLPESLGGIRACTLTVYPPEEATPSPSRESPLSGP.

The BTB domain maps to cysteine 91–methionine 160. A BACK domain is found at cysteine 195–glutamine 296. Kelch repeat units follow at residues arginine 340–asparagine 388, phenylalanine 389–glycine 440, phenylalanine 441–glycine 487, methionine 489–aspartate 534, leucine 536–asparagine 586, and lysine 587–valine 635.

In terms of assembly, component of the BCR(KLHL9-KLHL13) E3 ubiquitin ligase complex, at least composed of CUL3, KLHL9, KLHL13 and RBX1. Interacts with AURKB.

Its pathway is protein modification; protein ubiquitination. Its function is as follows. Substrate-specific adapter of a BCR (BTB-CUL3-RBX1) E3 ubiquitin-protein ligase complex required for mitotic progression and cytokinesis. The BCR(KLHL9-KLHL13) E3 ubiquitin ligase complex mediates the ubiquitination of AURKB and controls the dynamic behavior of AURKB on mitotic chromosomes and thereby coordinates faithful mitotic progression and completion of cytokinesis. The polypeptide is Kelch-like protein 13 (Klhl13) (Mus musculus (Mouse)).